A 121-amino-acid polypeptide reads, in one-letter code: Small ribosomal subunit protein uS13 (121 aa).

The disordered stretch occupies residues 91 to 121 (HKRGLPVRGQRTRTNARTRKGPRRAAASLKK).

The protein belongs to the universal ribosomal protein uS13 family. As to quaternary structure, part of the 30S ribosomal subunit. Forms a loose heterodimer with protein S19. Forms two bridges to the 50S subunit in the 70S ribosome.

In terms of biological role, located at the top of the head of the 30S subunit, it contacts several helices of the 16S rRNA. In the 70S ribosome it contacts the 23S rRNA (bridge B1a) and protein L5 of the 50S subunit (bridge B1b), connecting the 2 subunits; these bridges are implicated in subunit movement. Contacts the tRNAs in the A and P-sites. This chain is Small ribosomal subunit protein uS13, found in Bordetella avium (strain 197N).